We begin with the raw amino-acid sequence, 165 residues long: MALNLQDKQAIVAEVTEVAKGALSAVVADSRGVTVDKMTELRKAGREAGVYMRVVRNTLMRRVVEGSQFECLKDTFVGPTLIAFSMEHPGAAARLFKAFAKDNAKFEVKAAAFEGELIPAAQIDRLATLPTYEEAIARLMATMKEAAAGKLVRTLAALRDQKEAA.

This sequence belongs to the universal ribosomal protein uL10 family. In terms of assembly, part of the ribosomal stalk of the 50S ribosomal subunit. The N-terminus interacts with L11 and the large rRNA to form the base of the stalk. The C-terminus forms an elongated spine to which L12 dimers bind in a sequential fashion forming a multimeric L10(L12)X complex.

Functionally, forms part of the ribosomal stalk, playing a central role in the interaction of the ribosome with GTP-bound translation factors. In Edwardsiella ictaluri (strain 93-146), this protein is Large ribosomal subunit protein uL10.